Reading from the N-terminus, the 440-residue chain is MKMAGWKKKLCPGHHLWALGCYMLLAVVSLRLSLRFKCDVDSLDLESRDFQSQHCRDMLYNSLKLPAKRSINCSGITRGDQEAVVQALLDNLEVKKKRPPLTDTYYLNITRDCERFKAQRKFIQFPLSKEELDFPIAYSMVVHEKIENFERLLRAVYAPQNIYCVHVDVKSPETFKEAVKAIISCFPNVFMASKLVPVVYASWSRVQADLNCMEDLLQSSVSWKYLLNTCGTDFPIKTNAEMVLALKMLKGKNSMESEVPSESKKNRWKYRYEVTDTLYPTSKMKDPPPDNLPMFTGNAYFVASRAFVQHVLDNPKSQILVEWVKDTYSPDEHLWATLQRAPWMPGSVPSHPKYHISDMTAIARLVKWQYHEGDVSMGAPYAPCSGIHRRAICIYGAGDLYWILQNHHLLANKFDPRVDDNVLQCLEEYLRHKAIYGTEL.

Topologically, residues 1–9 (MKMAGWKKK) are cytoplasmic. Residues 10-30 (LCPGHHLWALGCYMLLAVVSL) form a helical; Signal-anchor for type II membrane protein membrane-spanning segment. At 31-440 (RLSLRFKCDV…RHKAIYGTEL (410 aa)) the chain is on the lumenal side. Residues Asn72 and Asn108 are each glycosylated (N-linked (GlcNAc...) asparagine; by host). Cystine bridges form between Cys73–Cys230, Cys164–Cys384, Cys185–Cys212, and Cys393–Cys425.

The protein belongs to the glycosyltransferase 14 family.

It is found in the host Golgi apparatus membrane. The catalysed reaction is a 3-O-[beta-D-galactosyl-(1-&gt;3)-N-acetyl-alpha-D-galactosaminyl]-L-seryl-[protein] + UDP-N-acetyl-alpha-D-glucosamine = 3-O-{beta-D-galactosyl-(1-&gt;3)-[N-acetyl-beta-D-glucosaminyl-(1-&gt;6)]-N-acetyl-alpha-D-galactosaminyl}-L-seryl-[protein] + UDP + H(+). The enzyme catalyses a 3-O-[beta-D-galactosyl-(1-&gt;3)-N-acetyl-alpha-D-galactosaminyl]-L-threonyl-[protein] + UDP-N-acetyl-alpha-D-glucosamine = a 3-O-{beta-D-galactosyl-(1-&gt;3)-[N-acetyl-beta-D-glucosaminyl-(1-&gt;6)]-N-acetyl-alpha-D-galactosaminyl}-L-threonyl-[protein] + UDP + H(+). It catalyses the reaction a beta-D-Gal-(1-&gt;4)-beta-D-GlcNAc-(1-&gt;3)-beta-D-Gal-(1-&gt;4)-beta-D-GlcNAc derivative + UDP-N-acetyl-alpha-D-glucosamine = a beta-D-Gal-(1-&gt;4)-beta-D-GlcNAc-(1-&gt;3)-[beta-D-GlcNAc-(1-&gt;6)]-beta-D-Gal-(1-&gt;4)-N-acetyl-beta-D-glucosaminyl derivative + UDP + H(+). It carries out the reaction 3-O-[N-acetyl-beta-D-glucosaminyl-(1-&gt;3)-N-acetyl-alpha-D-galactosaminyl]-L-seryl-[protein] + UDP-N-acetyl-alpha-D-glucosamine = 3-O-[N-acetyl-beta-D-glucosaminyl-(1-&gt;3)-[N-acetyl-beta-D-glucosaminyl-(1-&gt;6)]-N-acetyl-alpha-D-galactosaminyl]-L-seryl-[protein] + UDP + H(+). The catalysed reaction is a 3-O-[N-acetyl-beta-D-glucosaminyl-(1-&gt;3)-N-acetyl-alpha-D-galactosaminyl]-L-threonyl-[protein] + UDP-N-acetyl-alpha-D-glucosamine = 3-O-[N-acetyl-beta-D-glucosaminyl-(1-&gt;3)-[N-acetyl-beta-D-glucosaminyl-(1-&gt;6)]-N-acetyl-alpha-D-galactosaminyl]-L-threonyl-[protein] + UDP + H(+). It participates in protein modification; protein glycosylation. Non-essential glycosyltransferase that can synthesize all known mucin beta 6 N-acetylglucosaminides. Mediates core 2 and core 4 O-glycan branching, 2 important steps in mucin-type biosynthesis. Has also I-branching enzyme activity by converting linear into branched poly-N-acetyllactosaminoglycans. Contributes to the post-translational modifications of structural proteins. The sequence is that of Beta-1,3-galactosyl-O-glycosyl-glycoprotein beta-1,6-N-acetylglucosaminyltransferase (Bo17) from Bovine herpesvirus 4 (strain LVR140) (BoHV-4).